The sequence spans 271 residues: Monalysin (271 aa).

The propeptide occupies 1–33; it reads MTIKEELGQPQSHSIELDEVSKEAASTRAALTS. Positions 102–170 are pore-forming domain; the sequence is IPQNVTTTLS…FTDTTEMKGP (69 aa).

In terms of assembly, pro-Monalysin forms a stable donut-like 18-mer complex composed of two disk-shaped nonamers held together by N-terminal swapping of the pro-peptides. After proteolytic cleavage, the inactive 18-mer complex probably dissociates into two disk-shaped active nonamers in which the transmembrane segments are unmasked and ready to engage the conformational change leading to the pore formation into the target membrane. Multimerizes into circular-like structures and barrel-like aggregates. In terms of processing, requires N-terminal cleavage to become fully active. The metalloprotease AprA can induce the rapid cleavage of pro-Monalysin into its active form. Can also be processed by trypsin.

Its subcellular location is the secreted. It is found in the host cell membrane. Pore-forming toxin that contributes to the virulence of P.entomophila against Drosophila, playing an important role in host intestinal damage and lethality. Displays cytolytic and hemolytic activity. The chain is Monalysin from Pseudomonas entomophila (strain L48).